A 101-amino-acid polypeptide reads, in one-letter code: MRPYELMVIIDPEVEERTVEPSLQKFLNVITNDGGTIEKVDIWGRRRLAYDIKKKSEGIYAVVNFTAKPETAKELDRQLSLNETIMRTKITRPEEQKVVAE.

This sequence belongs to the bacterial ribosomal protein bS6 family.

Binds together with bS18 to 16S ribosomal RNA. This Pseudarthrobacter chlorophenolicus (strain ATCC 700700 / DSM 12829 / CIP 107037 / JCM 12360 / KCTC 9906 / NCIMB 13794 / A6) (Arthrobacter chlorophenolicus) protein is Small ribosomal subunit protein bS6.